A 39-amino-acid chain; its full sequence is Photosystem II reaction center protein L (39 aa).

Residues 18-38 (SLYLGLLLVFVTAVLFTSYFF) traverse the membrane as a helical segment.

This sequence belongs to the PsbL family. PSII is composed of 1 copy each of membrane proteins PsbA, PsbB, PsbC, PsbD, PsbE, PsbF, PsbH, PsbI, PsbJ, PsbK, PsbL, PsbM, PsbT, PsbX, PsbY, Psb30/Ycf12, peripheral proteins PsbO, CyanoQ (PsbQ), PsbU, PsbV and a large number of cofactors. It forms dimeric complexes.

It is found in the cellular thylakoid membrane. Functionally, one of the components of the core complex of photosystem II (PSII). PSII is a light-driven water:plastoquinone oxidoreductase that uses light energy to abstract electrons from H(2)O, generating O(2) and a proton gradient subsequently used for ATP formation. It consists of a core antenna complex that captures photons, and an electron transfer chain that converts photonic excitation into a charge separation. This subunit is found at the monomer-monomer interface and is required for correct PSII assembly and/or dimerization. In Prochlorococcus marinus (strain MIT 9313), this protein is Photosystem II reaction center protein L.